Reading from the N-terminus, the 134-residue chain is Small ribosomal subunit protein uS8 (134 aa).

This sequence belongs to the universal ribosomal protein uS8 family. As to quaternary structure, part of the 30S ribosomal subunit. Contacts proteins S5 and S12.

Functionally, one of the primary rRNA binding proteins, it binds directly to 16S rRNA central domain where it helps coordinate assembly of the platform of the 30S subunit. The protein is Small ribosomal subunit protein uS8 of Thermosipho melanesiensis (strain DSM 12029 / CIP 104789 / BI429).